The following is a 499-amino-acid chain: Glutamyl-tRNA(Gln) amidotransferase subunit A (499 aa).

Active-site charge relay system residues include Lys-79 and Ser-154. Ser-178 serves as the catalytic Acyl-ester intermediate.

Belongs to the amidase family. GatA subfamily. Heterotrimer of A, B and C subunits.

The enzyme catalyses L-glutamyl-tRNA(Gln) + L-glutamine + ATP + H2O = L-glutaminyl-tRNA(Gln) + L-glutamate + ADP + phosphate + H(+). Allows the formation of correctly charged Gln-tRNA(Gln) through the transamidation of misacylated Glu-tRNA(Gln) in organisms which lack glutaminyl-tRNA synthetase. The reaction takes place in the presence of glutamine and ATP through an activated gamma-phospho-Glu-tRNA(Gln). This Psychrobacter sp. (strain PRwf-1) protein is Glutamyl-tRNA(Gln) amidotransferase subunit A.